A 1169-amino-acid polypeptide reads, in one-letter code: MSADSSLLMGSTPPSYGTLTTGTSIDPLSSSASSVRLSGYCGSPWRAIGYHAAVWMLAGIPWLLFRWKPLWGVRLRLKPCSLAHAETLVIEIKDKEGSSRQLFTVQVQTEAVVQGSLELPPQAQAEDGRSQAAVGVTPEGTWQDTSELHRQEEAKQVLRYYVLQGQRYVWMETQQAFCQVSLLDHGRTCDDVHCSSSGLSLQDQATRKTIYGPNVISIPVKSYLQLLADEALNPYYGFQAFSIALWLADHYYWYALCIFLISAISICLALYKTRKQSLTLRDMVKLSVRVQVCRPGGEEEWVDSSELVPGDCLVLPQEGGVMPCDAALVAGECVVNESSLTGESTPVLKTALPEGPKPYCPETHRRHTLFCGTLILQARAYVGPRVLAVVTRTGFCTAKGGLVSSILHPRPISFKFYKHSMKFVAALSVLALLGTVYSIIILYRNRVPVREIVIRALDLVTVVVPPALPAAMTVCTLYAQSRLRTQGIFCIHPLRINLGGKLRLVCFDKTGTLTEDGLDVMGVVPLKGQVLLPLVPEPCHLPLGPLLRALATCHALSQLHDTPVGDPMDLKMVESTGWVLEEGPAAGSAPGSQVLVVMRPPPGGPRQQEEPPVPVSVLCRFPFSSALQRMDVVVTWPGATQPEAYVKGSPELVASLCSPETVPSDFSQVLQSYTAAGYRVVALAGKPLPIAPSLAAAQQLTRDTVERELSLLGLLVMRNLLKPQTAPVIQTLRKTGIRTVMVTGDNLQTAVTVARACGMVGAQEHLAVIHATHPEQGQPAALEFLPTESSAVMNGAKATGYPTVPEPQSCHLALSGSTFAVLRKHFPKLLPKVLVQATVFARMAPEQKTELVCELQRLQYCVGMCGDGANDCGALKAADVGISLSQAEASVVSPFTSSMASIECVPTVIREGRCSLDTSFSVFKYMALYSLTQFISVLILYTINTNLGDLQFLAIDLVITTTVAVLMSRTGPALTLVRARPPGALLSVPVLGSLLLQVALVAGIQLGGYFLVIAQPWFVPLNRTVPAPDNLPNYENTVVFSLSGFQYLILAAAVSKGAPFRQPLYTNVPFLVALALLGSVLVGLILVPGLLQGPLGLRNIVDSSFKLLLLGLVAFNFVGAFMLESVLDQCLPACLRWLRPKRASKKQFKRLQQELAEHPWPTLPVGSVR.

At 1–44 the chain is on the cytoplasmic side; sequence MSADSSLLMGSTPPSYGTLTTGTSIDPLSSSASSVRLSGYCGSP. The stretch at 45-65 is an intramembrane region; the sequence is WRAIGYHAAVWMLAGIPWLLF. Residues 66-225 are Cytoplasmic-facing; it reads RWKPLWGVRL…ISIPVKSYLQ (160 aa). The helical transmembrane segment at 226–246 threads the bilayer; the sequence is LLADEALNPYYGFQAFSIALW. At 247-250 the chain is on the lumenal side; it reads LADH. A helical membrane pass occupies residues 251–271; that stretch reads YYWYALCIFLISAISICLALY. The Cytoplasmic portion of the chain corresponds to 272 to 422; the sequence is KTRKQSLTLR…SFKFYKHSMK (151 aa). A helical membrane pass occupies residues 423 to 443; the sequence is FVAALSVLALLGTVYSIIILY. Residues 444–458 are Lumenal-facing; that stretch reads RNRVPVREIVIRALD. Residues 459 to 479 traverse the membrane as a helical segment; sequence LVTVVVPPALPAAMTVCTLYA. The Cytoplasmic portion of the chain corresponds to 480-919; sequence QSRLRTQGIF…REGRCSLDTS (440 aa). D508 (4-aspartylphosphate intermediate) is an active-site residue. The Mg(2+) site is built by D867 and D871. Residues 920 to 940 traverse the membrane as a helical segment; the sequence is FSVFKYMALYSLTQFISVLIL. At 941–946 the chain is on the lumenal side; it reads YTINTN. Residues 947-967 form a helical membrane-spanning segment; sequence LGDLQFLAIDLVITTTVAVLM. Residues 968-993 lie on the Cytoplasmic side of the membrane; it reads SRTGPALTLVRARPPGALLSVPVLGS. The helical transmembrane segment at 994–1014 threads the bilayer; the sequence is LLLQVALVAGIQLGGYFLVIA. Topologically, residues 1015-1037 are lumenal; it reads QPWFVPLNRTVPAPDNLPNYENT. N1022 carries an N-linked (GlcNAc...) asparagine glycan. Residues 1038 to 1058 traverse the membrane as a helical segment; the sequence is VVFSLSGFQYLILAAAVSKGA. The Cytoplasmic portion of the chain corresponds to 1059 to 1069; that stretch reads PFRQPLYTNVP. The helical transmembrane segment at 1070–1090 threads the bilayer; it reads FLVALALLGSVLVGLILVPGL. The Lumenal portion of the chain corresponds to 1091–1106; it reads LQGPLGLRNIVDSSFK. The chain crosses the membrane as a helical span at residues 1107–1127; sequence LLLLGLVAFNFVGAFMLESVL. The Cytoplasmic segment spans residues 1128–1169; sequence DQCLPACLRWLRPKRASKKQFKRLQQELAEHPWPTLPVGSVR.

Belongs to the cation transport ATPase (P-type) (TC 3.A.3) family. Type V subfamily. In terms of assembly, interacts with MYCBP2; the interaction inhibits the ubiquitination of TSC2 by MYCBP2. Interacts with HDAC6; the interaction results in recruitment of HDAC6 to lysosomes to promote CTTN deacetylation. In terms of processing, autophosphorylated. Accumulates in an inactive autophosphorylated state and autophosphorylation is stimulated by phosphatidic acid and phosphatidylinositol 3,5-bisphosphate but not by Mn(2+) or Zn(2+). The presence of spermine results in a dose-dependent reduction in autophosphorylation.

The protein localises to the lysosome membrane. It localises to the late endosome membrane. It is found in the endosome. Its subcellular location is the multivesicular body membrane. The protein resides in the cytoplasmic vesicle. The protein localises to the autophagosome membrane. It carries out the reaction spermidine(out) + ATP + H2O = spermidine(in) + ADP + phosphate + H(+). The catalysed reaction is spermine(out) + ATP + H2O = spermine(in) + ADP + phosphate + H(+). Its activity is regulated as follows. Accumulates in an inactive autophosphorylated state. The presence of spermine results in a dose-dependent reduction in autophosphorylation. ATPase which acts as a lysosomal polyamine exporter with high affinity for spermine. Also stimulates cellular uptake of polyamines and protects against polyamine toxicity. Plays a role in intracellular cation homeostasis and the maintenance of neuronal integrity. Contributes to cellular zinc homeostasis. Confers cellular protection against Mn(2+) and Zn(2+) toxicity and mitochondrial stress. Required for proper lysosomal and mitochondrial maintenance. Regulates the autophagy-lysosome pathway through the control of SYT11 expression at both transcriptional and post-translational levels. Facilitates recruitment of deacetylase HDAC6 to lysosomes to deacetylate CTTN, leading to actin polymerization, promotion of autophagosome-lysosome fusion and completion of autophagy. Promotes secretion of exosomes as well as secretion of SCNA via exosomes. Plays a role in lipid homeostasis. The protein is Polyamine-transporting ATPase 13A2 of Mus musculus (Mouse).